The sequence spans 46 residues: Crambin (46 aa).

3 cysteine pairs are disulfide-bonded: Cys-3–Cys-40, Cys-4–Cys-32, and Cys-16–Cys-26.

This sequence belongs to the plant thionin (TC 1.C.44) family.

The protein localises to the secreted. Its function is as follows. The function of this hydrophobic plant seed protein is not known. This chain is Crambin (THI2), found in Crambe hispanica subsp. abyssinica (Abyssinian kale).